A 108-amino-acid chain; its full sequence is Insertion element IS6110 uncharacterized 12.0 kDa protein (108 aa).

Belongs to the transposase 8 family.

In Mycobacterium bovis (strain ATCC BAA-935 / AF2122/97), this protein is Insertion element IS6110 uncharacterized 12.0 kDa protein.